A 119-amino-acid chain; its full sequence is DNA-directed RNA polymerase subunit omega (119 aa).

Belongs to the RNA polymerase subunit omega family. In terms of assembly, the RNAP catalytic core consists of 2 alpha, 1 beta, 1 beta' and 1 omega subunit. When a sigma factor is associated with the core the holoenzyme is formed, which can initiate transcription.

The catalysed reaction is RNA(n) + a ribonucleoside 5'-triphosphate = RNA(n+1) + diphosphate. Functionally, promotes RNA polymerase assembly. Latches the N- and C-terminal regions of the beta' subunit thereby facilitating its interaction with the beta and alpha subunits. This chain is DNA-directed RNA polymerase subunit omega (rpoZ), found in Caulobacter vibrioides (strain ATCC 19089 / CIP 103742 / CB 15) (Caulobacter crescentus).